The primary structure comprises 305 residues: Aspartate carbamoyltransferase catalytic subunit (305 aa).

Carbamoyl phosphate is bound by residues R51 and T52. K79 lines the L-aspartate pocket. 3 residues coordinate carbamoyl phosphate: R101, H130, and Q133. L-aspartate contacts are provided by R163 and R215. G256 and P257 together coordinate carbamoyl phosphate.

The protein belongs to the aspartate/ornithine carbamoyltransferase superfamily. ATCase family. As to quaternary structure, heterododecamer (2C3:3R2) of six catalytic PyrB chains organized as two trimers (C3), and six regulatory PyrI chains organized as three dimers (R2).

It carries out the reaction carbamoyl phosphate + L-aspartate = N-carbamoyl-L-aspartate + phosphate + H(+). It participates in pyrimidine metabolism; UMP biosynthesis via de novo pathway; (S)-dihydroorotate from bicarbonate: step 2/3. Its function is as follows. Catalyzes the condensation of carbamoyl phosphate and aspartate to form carbamoyl aspartate and inorganic phosphate, the committed step in the de novo pyrimidine nucleotide biosynthesis pathway. This is Aspartate carbamoyltransferase catalytic subunit from Ehrlichia canis (strain Jake).